Reading from the N-terminus, the 1794-residue chain is Protein TIC 214 (1794 aa).

Transmembrane regions (helical) follow at residues 19 to 39 (IINSVVVVGLYYGFLTTFSIG), 68 to 88 (FIAGQLMMFISIYYAPLHLAL), 91 to 111 (PHTITVLALPYLLFHFFWNNH), 133 to 153 (VFLNNLIFQLFNHFILPSSML), 176 to 196 (VGWLIGHILFMKWVGLVLVWI), and 227 to 247 (IFSILLFITCVYYLGRIPSPI).

It belongs to the TIC214 family. Part of the Tic complex.

Its subcellular location is the plastid. The protein localises to the chloroplast inner membrane. Involved in protein precursor import into chloroplasts. May be part of an intermediate translocation complex acting as a protein-conducting channel at the inner envelope. The polypeptide is Protein TIC 214 (Olimarabidopsis pumila (Dwarf rocket)).